Consider the following 89-residue polypeptide: Small ribosomal subunit protein uS14A (89 aa).

The protein belongs to the universal ribosomal protein uS14 family. As to quaternary structure, part of the 30S ribosomal subunit. Contacts proteins S3 and S10.

Binds 16S rRNA, required for the assembly of 30S particles and may also be responsible for determining the conformation of the 16S rRNA at the A site. The polypeptide is Small ribosomal subunit protein uS14A (Bacillus pumilus (strain SAFR-032)).